The primary structure comprises 379 residues: Epoxyqueuosine reductase (379 aa).

The Proton donor role is filled by aspartate 139. The 33-residue stretch at 181–213 (IPLPVDQPVEEGCGKCVACMTICPTGAIVEPYT) folds into the 4Fe-4S ferredoxin-type domain. Cysteine 193, cysteine 196, cysteine 199, cysteine 203, cysteine 219, cysteine 246, cysteine 249, and cysteine 253 together coordinate [4Fe-4S] cluster.

The protein belongs to the QueG family. In terms of assembly, monomer. Cob(II)alamin is required as a cofactor. Requires [4Fe-4S] cluster as cofactor.

The protein localises to the cytoplasm. The enzyme catalyses epoxyqueuosine(34) in tRNA + AH2 = queuosine(34) in tRNA + A + H2O. The protein operates within tRNA modification; tRNA-queuosine biosynthesis. Catalyzes the conversion of epoxyqueuosine (oQ) to queuosine (Q), which is a hypermodified base found in the wobble positions of tRNA(Asp), tRNA(Asn), tRNA(His) and tRNA(Tyr). This is Epoxyqueuosine reductase from Escherichia coli (strain K12).